Consider the following 263-residue polypeptide: Acyl-[acyl-carrier-protein]--UDP-N-acetylglucosamine O-acyltransferase (263 aa).

This sequence belongs to the transferase hexapeptide repeat family. LpxA subfamily. As to quaternary structure, homotrimer.

It localises to the cytoplasm. The enzyme catalyses a (3R)-hydroxyacyl-[ACP] + UDP-N-acetyl-alpha-D-glucosamine = a UDP-3-O-[(3R)-3-hydroxyacyl]-N-acetyl-alpha-D-glucosamine + holo-[ACP]. It participates in glycolipid biosynthesis; lipid IV(A) biosynthesis; lipid IV(A) from (3R)-3-hydroxytetradecanoyl-[acyl-carrier-protein] and UDP-N-acetyl-alpha-D-glucosamine: step 1/6. Its function is as follows. Involved in the biosynthesis of lipid A, a phosphorylated glycolipid that anchors the lipopolysaccharide to the outer membrane of the cell. The polypeptide is Acyl-[acyl-carrier-protein]--UDP-N-acetylglucosamine O-acyltransferase (Xylella fastidiosa (strain Temecula1 / ATCC 700964)).